The following is a 111-amino-acid chain: UPF0122 protein LACR_1522 (111 aa).

Belongs to the UPF0122 family.

Might take part in the signal recognition particle (SRP) pathway. This is inferred from the conservation of its genetic proximity to ftsY/ffh. May be a regulatory protein. The polypeptide is UPF0122 protein LACR_1522 (Lactococcus lactis subsp. cremoris (strain SK11)).